The sequence spans 427 residues: Trigger factor (427 aa).

One can recognise a PPIase FKBP-type domain in the interval 163–248; sequence GNIAIIDFKG…VKGIKAKELP (86 aa).

The protein belongs to the FKBP-type PPIase family. Tig subfamily.

The protein resides in the cytoplasm. The catalysed reaction is [protein]-peptidylproline (omega=180) = [protein]-peptidylproline (omega=0). Involved in protein export. Acts as a chaperone by maintaining the newly synthesized protein in an open conformation. Functions as a peptidyl-prolyl cis-trans isomerase. The protein is Trigger factor of Clostridium botulinum (strain Eklund 17B / Type B).